A 78-amino-acid polypeptide reads, in one-letter code: MLCQQMIRTTAKRSSNIMTRPIIMKRSVHFKDGVYENIPFKVKGRKTPYALSHFGFFAIGFAVPFVACYVQLKKSGAF.

A mitochondrion-targeting transit peptide spans 1–27; that stretch reads MLCQQMIRTTAKRSSNIMTRPIIMKRS. Residues 28–51 lie on the Mitochondrial matrix side of the membrane; that stretch reads VHFKDGVYENIPFKVKGRKTPYAL. A helical membrane pass occupies residues 52 to 73; it reads SHFGFFAIGFAVPFVACYVQLK. Lys-74 is a topological domain (mitochondrial intermembrane). Positions 75–78 are excised as a propeptide; sequence SGAF.

The protein belongs to the cytochrome c oxidase VIIc family. In terms of assembly, component of the cytochrome c oxidase (complex IV, CIV), a multisubunit enzyme composed of 12 subunits. The complex is composed of a catalytic core of 3 subunits COX1, COX2 and COX3, encoded in the mitochondrial DNA, and 9 supernumerary subunits COX4, COX5A (or COX5B), COX6, COX7, COX8, COX9, COX12, COX13 and COX26, which are encoded in the nuclear genome. The complex exists as a monomer or a dimer and forms supercomplexes (SCs) in the inner mitochondrial membrane with a dimer of ubiquinol-cytochrome c oxidoreductase (cytochrome b-c1 complex, complex III, CIII), resulting in 2 different assemblies (supercomplexes III(2)IV and III(2)IV(2)).

Its subcellular location is the mitochondrion inner membrane. The protein operates within energy metabolism; oxidative phosphorylation. Functionally, component of the cytochrome c oxidase, the last enzyme in the mitochondrial electron transport chain which drives oxidative phosphorylation. The respiratory chain contains 3 multisubunit complexes succinate dehydrogenase (complex II, CII), ubiquinol-cytochrome c oxidoreductase (cytochrome b-c1 complex, complex III, CIII) and cytochrome c oxidase (complex IV, CIV), that cooperate to transfer electrons derived from NADH and succinate to molecular oxygen, creating an electrochemical gradient over the inner membrane that drives transmembrane transport and the ATP synthase. Cytochrome c oxidase is the component of the respiratory chain that catalyzes the reduction of oxygen to water. Electrons originating from reduced cytochrome c in the intermembrane space (IMS) are transferred via the dinuclear copper A center (CU(A)) of COX2 and heme A of COX1 to the active site in COX1, a binuclear center (BNC) formed by heme A3 and copper B (CU(B)). The BNC reduces molecular oxygen to 2 water molecules using 4 electrons from cytochrome c in the IMS and 4 protons from the mitochondrial matrix. The polypeptide is Cytochrome c oxidase subunit 8, mitochondrial (COX8) (Saccharomyces cerevisiae (strain ATCC 204508 / S288c) (Baker's yeast)).